A 258-amino-acid chain; its full sequence is Ribosomal RNA small subunit methyltransferase J (258 aa).

S-adenosyl-L-methionine-binding positions include 104 to 105 (RD), 120 to 121 (ER), and D175.

It belongs to the methyltransferase superfamily. RsmJ family.

The protein localises to the cytoplasm. The catalysed reaction is guanosine(1516) in 16S rRNA + S-adenosyl-L-methionine = N(2)-methylguanosine(1516) in 16S rRNA + S-adenosyl-L-homocysteine + H(+). Functionally, specifically methylates the guanosine in position 1516 of 16S rRNA. The protein is Ribosomal RNA small subunit methyltransferase J of Chromobacterium violaceum (strain ATCC 12472 / DSM 30191 / JCM 1249 / CCUG 213 / NBRC 12614 / NCIMB 9131 / NCTC 9757 / MK).